Reading from the N-terminus, the 515-residue chain is Probable cytochrome P450 6d4 (515 aa).

C457 is a binding site for heme.

Belongs to the cytochrome P450 family. Heme is required as a cofactor.

The protein localises to the endoplasmic reticulum membrane. It localises to the microsome membrane. Its function is as follows. May be involved in the metabolism of insect hormones and in the breakdown of synthetic insecticides. This Drosophila melanogaster (Fruit fly) protein is Probable cytochrome P450 6d4 (Cyp6d4).